A 1236-amino-acid chain; its full sequence is MRLISSLLLLVYSARLALSLNLTNQTAVLGYWGSNLAGKMGDRDQKRLSSYCQNTTYDAIILSSVIDFNVDGWPVYDFSNLCSDSDTFSGSELKKCPQIETDIQVCQENGIKVLLSIGGYNGNFSLNNDDDGTNFAFQVWNIFGSGEDSYRPFGKAVVDGFDLEVNKGTNTAYSAFAKRMLEIYASDPRRKYYISAAPTCMVPDHTLTKAISENSFDFLSIHTFNSSTGEGCSGSRNSTFDAWVEYAEDSAYNTNTSLFYGVVGHQNGSNGFISPKNLTRDLLNYKANSTLFGGVTIWDTSLAAMSYDNSSETFVEAIHKILDTKSKHSSSKSSHDSSQGLESTSSIALNPTSSISSTSSSSSTSSAISTISQDHTKTVTSVSDEPTTITASGATSVTTTTKTDFDTVTTTIVSTSTLISASDSTSIIVSSYVSTVTQPASTRVQTTTVSSISTSVKQPTASVASSSVSVPSSSSVQPQSSTPISSSSSASSPQSTLSTSSEVVSEVSSTLLSGSSAIPSTSSSTPSSSIISSPMTSVLSSSSSIPTSSSSDFSSSITTISSGISSSSIPSTFSSVSSILSSSTSSPSSTSLSISSSSTSSTFSSASTSSPSSISSSISSSSTILSSPTPSTSSLMISSSSIISGSSSILSSSISTIPISSSLSTYSSSVIPSSSTLVSSSSSLIVSSSPVASSSSSPIPSSSSLVSTYSASLSNITHSSLSLTAMSSSSAIPTSVNSSTLITASSSNTLLSSITSSSAIVSSTTVSNISSNLPSATASSQSQLTNSSTLATSLYLSSSSSRTISTSSTNEYNTSFHAPTVSSTTSSSSTTSLAANKGVNSNSITSLNLESTSSVTSTAYTTDSVTSTTALTSQGPSSSVVSSSLSSTTSLSTSIPVTSSVAPAVTSTGSETSSVVGSGTDSATSSSWTAETSSSAITSSVAASVTPTSSSSASSWSSSSEVDPSTAASATGSSTSSIATASVSGSSTSSVATASATDSSTSSIAAASVTGSSTSSVATASVTDSSTSSVATASATDSSTSSIAVASVTGSSTSSVATASATDSSTSSVATASITGSLSSSIATASVTGSPTSSVTAVSSTSSVEGTASSTIAAAASAATLSSDAASGSSTVTSSATASSSSSAATTADSSVTTDTPSNDFNANVDTAGLWYVSALSSYSVPAGFAWTTIDGFSVVMPSANAYKKRSLPIKATANPALNGAGTWKTIHTSATTTAA.

The signal sequence occupies residues 1 to 19 (MRLISSLLLLVYSARLALS). N-linked (GlcNAc...) asparagine glycans are attached at residues Asn-21, Asn-24, Asn-54, Asn-123, Asn-225, Asn-237, Asn-255, Asn-267, Asn-277, Asn-288, and Asn-309. Positions 26 to 325 (TAVLGYWGSN…EAIHKILDTK (300 aa)) constitute a GH18 domain. Disordered stretches follow at residues 326–367 (SKHS…TSSA), 449–497 (VSSI…QSTL), and 584–625 (TSSP…STIL). The span at 339–351 (QGLESTSSIALNP) shows a compositional bias: polar residues. The segment covering 352 to 367 (TSSISSTSSSSSTSSA) has biased composition (low complexity). Residues Asn-715, Asn-737, Asn-768, Asn-786, and Asn-813 are each glycosylated (N-linked (GlcNAc...) asparagine). 4 disordered regions span residues 804 to 836 (ISTSSTNEYNTSFHAPTVSSTTSSSSTTSLAAN), 868 to 927 (TTAL…TSSS), 946 to 979 (TPTSSSSASSWSSSSEVDPSTAASATGSSTSSIA), and 1125 to 1159 (AASGSSTVTSSATASSSSSAATTADSSVTTDTPSN). A compositionally biased stretch (polar residues) spans 810 to 821 (NEYNTSFHAPTV). A compositionally biased stretch (low complexity) spans 822-832 (SSTTSSSSTTS). A compositionally biased stretch (low complexity) spans 1125–1156 (AASGSSTVTSSATASSSSSAATTADSSVTTDT).

The protein belongs to the glycosyl hydrolase 18 family. Chitinase class III subfamily.

Its subcellular location is the secreted. The sequence is that of Chitinase-like protein PB1E7.04c from Schizosaccharomyces pombe (strain 972 / ATCC 24843) (Fission yeast).